The primary structure comprises 185 residues: Small ribosomal subunit protein uS5c (185 aa).

In terms of domain architecture, S5 DRBM spans 26-89 (FVERLIKISR…ADGRKNLIKI (64 aa)).

This sequence belongs to the universal ribosomal protein uS5 family. As to quaternary structure, part of the 30S ribosomal subunit. Contacts protein S4.

The protein localises to the plastid. It localises to the chloroplast. Functionally, with S4 and S12 plays an important role in translational accuracy. In Trieres chinensis (Marine centric diatom), this protein is Small ribosomal subunit protein uS5c (rps5).